The following is a 351-amino-acid chain: Secreted frizzled-related sequence protein 4 (351 aa).

Residues 1–18 (MLRSILVALCLWLRLALG) form the signal peptide. Positions 19–139 (VRGAPCEAVR…VYDRGVCISP (121 aa)) constitute an FZ domain. 5 disulfides stabilise this stretch: Cys24–Cys85, Cys32–Cys78, Cys69–Cys108, Cys97–Cys136, and Cys101–Cys125. N-linked (GlcNAc...) asparagine glycans are attached at residues Asn38 and Asn68. N-linked (GlcNAc...) asparagine glycosylation is found at Asn116, Asn194, and Asn240. The region spanning 178–306 (CKCKKVKPTL…TIQDKKQIAS (129 aa)) is the NTR domain. The span at 293–303 (EQQRTIQDKKQ) shows a compositional bias: basic and acidic residues. Residues 293 to 351 (EQQRTIQDKKQIASRTSRTSRSNPPKSKGRPPAPKPASPKKNIKARSAPKKSNLKKSAS) form a disordered region. The span at 306 to 318 (SRTSRTSRSNPPK) shows a compositional bias: low complexity. Basic residues predominate over residues 333–351 (KNIKARSAPKKSNLKKSAS).

It belongs to the secreted frizzled-related protein (sFRP) family. As to expression, expressed in the ovary. Localized to granulosa cells of periovulatory follicles and corpora lutea. Weakly expressed in adult tissues including kidney, brain and lung.

The protein localises to the secreted. Functionally, soluble frizzled-related proteins (sFRPS) function as modulators of Wnt signaling through direct interaction with Wnts. They have a role in regulating cell growth and differentiation in specific cell types. SFRP4 plays a role in bone morphogenesis. May also act as a regulator of adult uterine morphology and function. May also increase apoptosis during ovulation possibly through modulation of FZ1/FZ4/WNT4 signaling. Has phosphaturic effects by specifically inhibiting sodium-dependent phosphate uptake. The chain is Secreted frizzled-related sequence protein 4 (Sfrp4) from Mus musculus (Mouse).